Consider the following 372-residue polypeptide: Aminomethyltransferase (372 aa).

It belongs to the GcvT family. In terms of assembly, the glycine cleavage system is composed of four proteins: P, T, L and H.

It carries out the reaction N(6)-[(R)-S(8)-aminomethyldihydrolipoyl]-L-lysyl-[protein] + (6S)-5,6,7,8-tetrahydrofolate = N(6)-[(R)-dihydrolipoyl]-L-lysyl-[protein] + (6R)-5,10-methylene-5,6,7,8-tetrahydrofolate + NH4(+). In terms of biological role, the glycine cleavage system catalyzes the degradation of glycine. The sequence is that of Aminomethyltransferase from Burkholderia cenocepacia (strain ATCC BAA-245 / DSM 16553 / LMG 16656 / NCTC 13227 / J2315 / CF5610) (Burkholderia cepacia (strain J2315)).